We begin with the raw amino-acid sequence, 125 residues long: Glycine cleavage system H protein (125 aa).

Residues 19 to 101 (IATIGITDYA…MGDGWFIKLR (83 aa)) enclose the Lipoyl-binding domain. Lys-60 bears the N6-lipoyllysine mark.

It belongs to the GcvH family. In terms of assembly, the glycine cleavage system is composed of four proteins: P, T, L and H. Requires (R)-lipoate as cofactor.

Functionally, the glycine cleavage system catalyzes the degradation of glycine. The H protein shuttles the methylamine group of glycine from the P protein to the T protein. The polypeptide is Glycine cleavage system H protein (Parvibaculum lavamentivorans (strain DS-1 / DSM 13023 / NCIMB 13966)).